A 165-amino-acid polypeptide reads, in one-letter code: Peptide methionine sulfoxide reductase MsrA (165 aa).

Cysteine 10 is an active-site residue.

It belongs to the MsrA Met sulfoxide reductase family.

It catalyses the reaction L-methionyl-[protein] + [thioredoxin]-disulfide + H2O = L-methionyl-(S)-S-oxide-[protein] + [thioredoxin]-dithiol. The enzyme catalyses [thioredoxin]-disulfide + L-methionine + H2O = L-methionine (S)-S-oxide + [thioredoxin]-dithiol. Its function is as follows. Has an important function as a repair enzyme for proteins that have been inactivated by oxidation. Catalyzes the reversible oxidation-reduction of methionine sulfoxide in proteins to methionine. In Campylobacter jejuni (strain RM1221), this protein is Peptide methionine sulfoxide reductase MsrA.